The primary structure comprises 199 residues: 5'-deoxynucleotidase CKO_00504 (199 aa).

Residues 18 to 19 (RW) and histidine 33 each bind substrate. Positions 30-142 (VSEHSLQVAM…VKQADALCAY (113 aa)) constitute an HD domain. Residues histidine 33, histidine 68, and aspartate 69 each coordinate a divalent metal cation. Substrate is bound by residues aspartate 69, 77–80 (DLPT), and aspartate 137. Position 137 (aspartate 137) interacts with a divalent metal cation.

The protein belongs to the 5DNU family. Homodimer. A divalent metal cation serves as cofactor.

Its subcellular location is the cytoplasm. It carries out the reaction a 2'-deoxyribonucleoside 5'-phosphate + H2O = a 2'-deoxyribonucleoside + phosphate. Its function is as follows. Catalyzes the strictly specific dephosphorylation of 2'-deoxyribonucleoside 5'-monophosphates. The protein is 5'-deoxynucleotidase CKO_00504 of Citrobacter koseri (strain ATCC BAA-895 / CDC 4225-83 / SGSC4696).